We begin with the raw amino-acid sequence, 212 residues long: Redox-sensing transcriptional repressor Rex (212 aa).

Positions Leu17–Phe56 form a DNA-binding region, H-T-H motif. An NAD(+)-binding site is contributed by Gly91 to Gly96.

The protein belongs to the transcriptional regulatory Rex family. As to quaternary structure, homodimer.

The protein localises to the cytoplasm. Modulates transcription in response to changes in cellular NADH/NAD(+) redox state. In Streptococcus agalactiae serotype III (strain NEM316), this protein is Redox-sensing transcriptional repressor Rex.